The chain runs to 338 residues: CRISPR system Cmr subunit Cmr1-1 (338 aa).

This sequence belongs to the CRISPR system Cmr1 family. Part of the type III-B Cmr ribonucleoprotein (RNP) complex, an elongated RNP with Cmr2 and Cmr3 as the base, with Cmr4 and Cmr5 forming a helical core along the mature crRNA (39 or 45 nt in length), while the complex is capped by Cmr6 and Cmr1. The 5' end of the crRNA is bound to Cmr2 and Cmr3, while Cmr6 and a Cmr1 subunit (Cmr1-1 or Cmr1-2) cap the 3' end of the crRNA. The target RNA lies antiparallel to the crRNA, with its 5' end near Cmr1 and Cmr6 and its 3' end near Cmr2 and Cmr3; major target cleavage occurs nears the junction of Cmr1/Cmr6 and Cmr4/Cmr, with minor cleavage occurring at 6 nt intervals which coincide with the proposed spacing of Cmr4 subunits.

It localises to the cytoplasm. Its function is as follows. CRISPR (clustered regularly interspaced short palindromic repeat), is an adaptive immune system that provides protection against mobile genetic elements (viruses, transposable elements and conjugative plasmids). CRISPR clusters contain sequences complementary to antecedent mobile elements and target invading nucleic acids. CRISPR clusters are transcribed and processed into CRISPR RNA (crRNA), formerly called psiRNA (prokaryotic silencing) in this organism. Part of the Cmr ribonucleoprotein complex which has divalent cation-dependent endoribonuclease activity specific for ssRNA complementary to the crRNA (target RNA), generating 5' hydroxy- and 3' phosphate or 2'-3' cyclic phosphate termini. Cmr4 is probably the subunit that cleaves target RNA. Cmr complex does not cleave ssDNA complementary to the crRNA. Cleavage of invading RNA is guided by the crRNA; substrate cleavage occurs a fixed distance (14 nt) from the 3' end of the crRNA. In vitro reconstitution shows Cmr1-2 and Cmr5 are not absolutely necessary for target cleavage. This Pyrococcus furiosus (strain ATCC 43587 / DSM 3638 / JCM 8422 / Vc1) protein is CRISPR system Cmr subunit Cmr1-1.